Consider the following 175-residue polypeptide: MTTIVSVRRNGKVVIAGDGQVSLGNTVMKGNARKVRRLYNNKVLAGFAGGTADAFTLFERFERKLEMHQGHLLKSAVELAKDWRTDRALRKLEAILAVADETGSLIITGNGDVVQPENDLIAIGSGGNFAQAAATALLENTDLGAREIAEKSLNIAGDICVFTNHNHTIEELETK.

Threonine 2 is a catalytic residue. Residues glycine 157, cysteine 160, and threonine 163 each contribute to the Na(+) site.

This sequence belongs to the peptidase T1B family. HslV subfamily. As to quaternary structure, a double ring-shaped homohexamer of HslV is capped on each side by a ring-shaped HslU homohexamer. The assembly of the HslU/HslV complex is dependent on binding of ATP.

The protein resides in the cytoplasm. It catalyses the reaction ATP-dependent cleavage of peptide bonds with broad specificity.. Allosterically activated by HslU binding. Its function is as follows. Protease subunit of a proteasome-like degradation complex believed to be a general protein degrading machinery. The protein is ATP-dependent protease subunit HslV of Photobacterium profundum (strain SS9).